The following is a 382-amino-acid chain: D-galactonate dehydratase (382 aa).

Asp-183 contributes to the Mg(2+) binding site. The Proton donor role is filled by His-185. Residues Glu-209 and Glu-235 each contribute to the Mg(2+) site. His-285 acts as the Proton acceptor in catalysis.

This sequence belongs to the mandelate racemase/muconate lactonizing enzyme family. GalD subfamily. Mg(2+) serves as cofactor.

The catalysed reaction is D-galactonate = 2-dehydro-3-deoxy-D-galactonate + H2O. The protein operates within carbohydrate acid metabolism; D-galactonate degradation; D-glyceraldehyde 3-phosphate and pyruvate from D-galactonate: step 1/3. In terms of biological role, catalyzes the dehydration of D-galactonate to 2-keto-3-deoxy-D-galactonate. The sequence is that of D-galactonate dehydratase from Klebsiella pneumoniae subsp. pneumoniae (strain ATCC 700721 / MGH 78578).